The following is a 479-amino-acid chain: MTAAALLQWALASVPEIIVVTGACVLLIVGELVRKGRDDLLLWASVAIVLLAAVATLMLAGEMRPAYAGMFISDRFAVFFKLVFYLATILTFFLSRKYAEIEGIGRSEYYVLLLFALVGMMIMASAIDLLSIYVGLELMVLCTYVLTGFLRKERRSNEAALKYVILGAVSTAIFLYGVSLIYGLTGTTQLDRMAEAVSGGPLDPALLLAVVFIVAGLVFKIGAVPFHMWVPDVYEGAPTTITAFMSVAPKAAGFAVILRVFLNPLVEASNAWIIVAAIAVATMALGSFVALVQDNFKRLLAYSSIAHAGFAIFGVVAGGQDGIASVMLYLLIYTFMNLGIFGAVIMMRNGDFSGEVIEDYAGFAKFHPGLALLMLLYLFSLAGIPPTAGFFAKFYVLVALVERGFVALAVIAVLLSVVSAYFYIRIVMVIYMREPERAFEPALTPLVSATLAFTAAGTIGIGLFPAWFLRLAQQSAFGG.

14 consecutive transmembrane segments (helical) span residues 9 to 29, 40 to 60, 75 to 95, 110 to 130, 131 to 151, 164 to 184, 206 to 226, 238 to 258, 272 to 292, 299 to 319, 326 to 346, 371 to 391, 404 to 424, and 449 to 469; these read WALA…LLIV, LLLW…LMLA, RFAV…FFLS, YVLL…IDLL, SIYV…GFLR, VILG…IYGL, LLLA…AVPF, PTTI…AVIL, WIIV…VALV, LLAY…VAGG, VMLY…AVIM, ALLM…AGFF, GFVA…YFYI, and ATLA…AWFL.

The protein belongs to the complex I subunit 2 family. In terms of assembly, NDH-1 is composed of 14 different subunits. Subunits NuoA, H, J, K, L, M, N constitute the membrane sector of the complex.

Its subcellular location is the cell inner membrane. The catalysed reaction is a quinone + NADH + 5 H(+)(in) = a quinol + NAD(+) + 4 H(+)(out). NDH-1 shuttles electrons from NADH, via FMN and iron-sulfur (Fe-S) centers, to quinones in the respiratory chain. The immediate electron acceptor for the enzyme in this species is believed to be ubiquinone. Couples the redox reaction to proton translocation (for every two electrons transferred, four hydrogen ions are translocated across the cytoplasmic membrane), and thus conserves the redox energy in a proton gradient. The protein is NADH-quinone oxidoreductase subunit N 2 of Rhizobium meliloti (strain 1021) (Ensifer meliloti).